A 396-amino-acid polypeptide reads, in one-letter code: Pinosylvin synthase 2 (396 aa).

Substrate is bound at residue 60–63 (KFKR). Cysteine 170 is a catalytic residue. Residues leucine 273 and 311–313 (GGR) contribute to the substrate site.

This sequence belongs to the thiolase-like superfamily. Chalcone/stilbene synthases family. As to quaternary structure, homodimer.

Its subcellular location is the cytoplasm. It catalyses the reaction (E)-cinnamoyl-CoA + 3 malonyl-CoA + 3 H(+) = (E)-pinosylvin + 4 CO2 + 4 CoA. The catalysed reaction is 3-phenylpropanoyl-CoA + 3 malonyl-CoA + 3 H(+) = dihydropinosylvin + 4 CO2 + 4 CoA. It functions in the pathway phytoalexin biosynthesis; pinosylvin biosynthesis. In terms of biological role, catalyzes the production of pinosylvin from cinnamoyl-CoA and malonyl-CoA, and dihydropinosylvin from dihydrocinnamoyl-CoA. The chain is Pinosylvin synthase 2 from Pinus strobus (Eastern white pine).